Here is a 250-residue protein sequence, read N- to C-terminus: Flap endonuclease Xni (250 aa).

Asp104 is a binding site for Mg(2+). A 5'-3' exonuclease domain is found at 160 to 249 (VQPQQLTDFW…LQGNLQQLRL (90 aa)). K(+) contacts are provided by Leu171, Ala172, Pro180, Val182, and Ile185. Positions 184-189 (GIGPKS) are interaction with DNA.

It belongs to the Xni family. Mg(2+) serves as cofactor. It depends on K(+) as a cofactor.

Its function is as follows. Has flap endonuclease activity. During DNA replication, flap endonucleases cleave the 5'-overhanging flap structure that is generated by displacement synthesis when DNA polymerase encounters the 5'-end of a downstream Okazaki fragment. The sequence is that of Flap endonuclease Xni from Sodalis glossinidius (strain morsitans).